Consider the following 1828-residue polypeptide: Proteasome activator complex subunit 4 (1828 aa).

6 HEAT repeats span residues 462-506 (PEGP…LVDC), 985-1024 (NFCCRDLIPLVLEFLRPERQDVTQQQFKGALYCLLGNHGG), 1164-1202 (YVLPVRAIRYLVQCLNHDALIVRKMAISTVAGILKQLKR), 1339-1377 (DAFLPIIKPHLERLVADSHESTQRCAAEIVAGLIRGSKH), 1621-1659 (PVQVPLVLDVLRQTARSSSWHARYTVLTYIQTMVFYNLF), and 1665-1703 (EESVQGVRWLILQLMEDEQLEVREMAATTLSGLLQCNFL). The segment at 1635–1723 (ARSSSWHARY…EALCKTRLPK (89 aa)) is bromodomain-like (BRDL).

It belongs to the BLM10 family. As to quaternary structure, homodimer. Interacts with the 20S and 26S proteasomes.

The protein localises to the cytoplasm. It is found in the cytosol. It localises to the nucleus. Its subcellular location is the nucleus speckle. In terms of biological role, associated component of the proteasome that specifically recognizes acetylated histones and promotes ATP- and ubiquitin-independent degradation of core histones during DNA damage response. Recognizes and binds acetylated histones via its bromodomain-like (BRDL) region and activates the proteasome by opening the gated channel for substrate entry. Binds to the core proteasome via its C-terminus, which occupies the same binding sites as the proteasomal ATPases, opening the closed structure of the proteasome via an active gating mechanism. involved in DNA damage response in somatic cells: binds to acetylated histones and promotes degradation of histones. The chain is Proteasome activator complex subunit 4 (psme4) from Xenopus laevis (African clawed frog).